Reading from the N-terminus, the 192-residue chain is Potassium-transporting ATPase KdpC subunit (192 aa).

Residues 7–27 (PLIVLFVVLAALTGLAYPAVM) form a helical membrane-spanning segment.

The protein belongs to the KdpC family. In terms of assembly, the system is composed of three essential subunits: KdpA, KdpB and KdpC.

It is found in the cell inner membrane. Functionally, part of the high-affinity ATP-driven potassium transport (or Kdp) system, which catalyzes the hydrolysis of ATP coupled with the electrogenic transport of potassium into the cytoplasm. This subunit acts as a catalytic chaperone that increases the ATP-binding affinity of the ATP-hydrolyzing subunit KdpB by the formation of a transient KdpB/KdpC/ATP ternary complex. The sequence is that of Potassium-transporting ATPase KdpC subunit from Paraburkholderia xenovorans (strain LB400).